We begin with the raw amino-acid sequence, 325 residues long: Phosphate acyltransferase (325 aa).

The protein belongs to the PlsX family. Homodimer. Probably interacts with PlsY.

It is found in the cytoplasm. It carries out the reaction a fatty acyl-[ACP] + phosphate = an acyl phosphate + holo-[ACP]. It participates in lipid metabolism; phospholipid metabolism. In terms of biological role, catalyzes the reversible formation of acyl-phosphate (acyl-PO(4)) from acyl-[acyl-carrier-protein] (acyl-ACP). This enzyme utilizes acyl-ACP as fatty acyl donor, but not acyl-CoA. This chain is Phosphate acyltransferase, found in Staphylococcus epidermidis (strain ATCC 35984 / DSM 28319 / BCRC 17069 / CCUG 31568 / BM 3577 / RP62A).